Reading from the N-terminus, the 261-residue chain is Indole-3-glycerol phosphate synthase (261 aa).

This sequence belongs to the TrpC family.

It carries out the reaction 1-(2-carboxyphenylamino)-1-deoxy-D-ribulose 5-phosphate + H(+) = (1S,2R)-1-C-(indol-3-yl)glycerol 3-phosphate + CO2 + H2O. It functions in the pathway amino-acid biosynthesis; L-tryptophan biosynthesis; L-tryptophan from chorismate: step 4/5. The chain is Indole-3-glycerol phosphate synthase from Burkholderia pseudomallei (strain 668).